The primary structure comprises 154 residues: Myoglobin (154 aa).

Residues 2–148 (GLSDGEWELV…FRNDIAAKYK (147 aa)) enclose the Globin domain. Ser-4 bears the Phosphoserine mark. Thr-68 is modified (phosphothreonine). Residue His-94 coordinates heme b.

This sequence belongs to the globin family. In terms of assembly, monomeric.

It localises to the cytoplasm. Its subcellular location is the sarcoplasm. The enzyme catalyses Fe(III)-heme b-[protein] + nitric oxide + H2O = Fe(II)-heme b-[protein] + nitrite + 2 H(+). It catalyses the reaction H2O2 + AH2 = A + 2 H2O. In terms of biological role, monomeric heme protein which primary function is to store oxygen and facilitate its diffusion within muscle tissues. Reversibly binds oxygen through a pentacoordinated heme iron and enables its timely and efficient release as needed during periods of heightened demand. Depending on the oxidative conditions of tissues and cells, and in addition to its ability to bind oxygen, it also has a nitrite reductase activity whereby it regulates the production of bioactive nitric oxide. Under stress conditions, like hypoxia and anoxia, it also protects cells against reactive oxygen species thanks to its pseudoperoxidase activity. The polypeptide is Myoglobin (MB) (Loxodonta africana (African elephant)).